The following is a 540-amino-acid chain: MDGLQSLGDVTAEIFGLPLEGHSVQESKPLKTEDEPQGAPLKPLVFRVDESTPGLVQSVLLERGWDKFDEQRQDVEDWNLYWRSSSFRRAEYVNVKPWQRLNHHPGMTNLTRKDCLAKHLARMRSRYGESLYEFTPLTFIMPTDYTKFVAKYFKEKQDLGTKPSYWICKPAELSRGRGIIIFSDIRDLMFKGTYVVQKYICNPLLVGRYKCDLRIYVCITGFKPLTIYMYQEGLVRFATEKFDLRNLEDYYSHLTNSSINKLGASYQKIKEVVGQGCKWTLSRFFSYLRNWDVDDLLLRQKISHMVILTVLAMAPSVPVTYNCFELFGFDILIDDNLKPWLLEVNYNPALTLDCSTDESVKRSLVHDVIELLYLNGLRSEEKKCGRTSPGNSVVSLARSHHHEFCATPNSSSYASLIEFTTGSKSDPAVQNICPKHTRTSQLREMMSRRDRLLTKEAAKSKPRHKAWHLPRKMVFPYASQSQPHKMKGPAGDLPEAGSTPNDHAGNFVLIFPFNKATFRASRNGLNVKRIIQELQKLMNK.

Positions 41–384 (LKPLVFRVDE…NGLRSEEKKC (344 aa)) constitute a TTL domain. ATP-binding positions include Lys169, 175-176 (RG), 197-200 (QKYI), and 210-212 (KCD). A protein is bound at residue Arg175. Arg236 is a binding site for L-glutamate. 255-256 (TN) is an ATP binding site. Positions 258 and 278 each coordinate L-glutamate. Mg(2+)-binding residues include Asp330, Glu343, and Asn345. Lys361 lines the L-glutamate pocket. The disordered stretch occupies residues 479 to 499 (SQSQPHKMKGPAGDLPEAGST).

The protein belongs to the tubulin--tyrosine ligase family. Requires Mg(2+) as cofactor. Highly expressed in brain, kidney, liver and testis. Expressed in heart, lung, muscle and spleen.

In terms of biological role, probable tubulin polyglutamylase that generates side chains of glutamate on the gamma-carboxyl group of specific glutamate residues within the C-terminal tail of target proteins. Similar to TTLL1, may acquire enzymatic activity only in complex with other proteins as it is most likely lacking domains important for autonomous activity. Probably involved in the side-chain initiation step of the polyglutamylation reaction rather than the elongation step. The chain is Probable tubulin polyglutamylase TTLL2 from Mus musculus (Mouse).